The chain runs to 183 residues: Mitochondrial import inner membrane translocase subunit tim17 (183 aa).

The next 3 helical transmembrane spans lie at 13–33, 57–77, and 107–127; these read AGGAFAIGYVLMGVVNIGLGF, GGNFAIWGSLFSGFDCTLSYI, and VQAAAFGGIFIGIIEAFQHMM. A compositionally biased stretch (polar residues) spans 131-141; sequence MQAQQEEMTQQ. A disordered region spans residues 131-183; it reads MQAQQEEMTQQHLEERKRYEEERKQREGERKKLNENGKSKKNKQQQNGENDLD. The segment covering 142–168 has biased composition (basic and acidic residues); it reads HLEERKRYEEERKQREGERKKLNENGK. The segment covering 174-183 has biased composition (low complexity); it reads QQQNGENDLD.

The protein belongs to the Tim17/Tim22/Tim23 family.

It localises to the mitochondrion inner membrane. Functionally, may be involved in the translocation of transit peptide-containing proteins across the mitochondrial inner membrane. This Dictyostelium discoideum (Social amoeba) protein is Mitochondrial import inner membrane translocase subunit tim17 (timm17).